The chain runs to 340 residues: Pesticidal crystal protein Cry15Aa (340 aa).

Residues 318-340 (RDYDKEHICHDQAEKYERDYDKE) are disordered.

Its function is as follows. Promotes colloidosmotic lysis by binding to the midgut epithelial cells of lepidopteran larvae. In Bacillus thuringiensis subsp. thompsoni, this protein is Pesticidal crystal protein Cry15Aa (cry15Aa).